The following is a 212-amino-acid chain: Ras-like protein (212 aa).

15–22 contacts GTP; sequence GGGGVGKS. Positions 37 to 45 match the Effector region motif; it reads YDPTIEDSY. GTP is bound by residues 62-66 and 121-124; these read DTAGQ and NKCD. S-palmitoyl cysteine attachment occurs at residues cysteine 205 and cysteine 206. Residue cysteine 209 is modified to Cysteine methyl ester. Cysteine 209 carries S-geranylgeranyl cysteine lipidation. A propeptide spans 210–212 (removed in mature form); that stretch reads IVM.

The protein belongs to the small GTPase superfamily. Ras family.

Its subcellular location is the cell membrane. It catalyses the reaction GTP + H2O = GDP + phosphate + H(+). Its activity is regulated as follows. Alternates between an inactive form bound to GDP and an active form bound to GTP. Activated by a guanine nucleotide-exchange factor (GEF) and inactivated by a GTPase-activating protein (GAP). The protein is Ras-like protein (rasA) of Emericella nidulans (strain FGSC A4 / ATCC 38163 / CBS 112.46 / NRRL 194 / M139) (Aspergillus nidulans).